The sequence spans 630 residues: Plastin-1 (630 aa).

Residues 1–114 (MENNVTTISR…LGGTSSISTE (114 aa)) are fimbrin headpiece. EF-hand domains lie at 11–46 (EELE…ASLP) and 51–86 (KVRE…LKSK). Asp24, Asp26, Ser28, Tyr30, Glu35, Asp64, Asn66, Asp68, Lys70, and Glu75 together coordinate Ca(2+). Actin-binding stretches follow at residues 108 to 375 (TSSI…LFNT) and 376 to 624 (YPAL…LMGR). The interval 115–630 (GTQHSYSEEE…LMGRGLNKIK (516 aa)) is fimbrin core. Calponin-homology (CH) domains follow at residues 122–238 (EEEK…KVGL), 266–377 (LSPE…NTYP), 396–505 (SNEE…RRYT), and 517–626 (KVND…GRGL).

As to quaternary structure, monomer. The N-terminus is blocked.

It is found in the cytoplasm. It localises to the cell projection. The protein localises to the stereocilium. Its function is as follows. Actin-bundling protein. In the inner ear, it is required for stereocilia formation. Mediates liquid packing of actin filaments that is necessary for stereocilia to grow to their proper dimensions. This Gallus gallus (Chicken) protein is Plastin-1 (PLS1).